The sequence spans 466 residues: Probable agmatine/putrescine antiporter AguD (466 aa).

The next 12 helical transmembrane spans lie at Phe-8–Ala-28, Val-30–Leu-50, Ala-85–Pro-105, Ile-120–Val-140, Val-144–Leu-164, Leu-192–Ala-212, Ile-226–Val-246, Trp-273–Trp-293, Trp-325–Leu-345, Leu-350–Phe-370, Val-398–Leu-418, and Thr-426–Ile-446.

This sequence belongs to the amino acid-polyamine-organocation (APC) superfamily. Glutamate:GABA antiporter (GGA) (TC 2.A.3.7) family.

The protein localises to the cell membrane. Its function is as follows. Probably catalyzes agmatine/putrescine exchange. This is Probable agmatine/putrescine antiporter AguD from Lactococcus lactis subsp. lactis (strain IL1403) (Streptococcus lactis).